Reading from the N-terminus, the 347-residue chain is MTNKTSLSYKDAGVDIDAGNDLVDRIKGVVKQTRRPEVMGGLGGFGALCALPQKYREPILVSGTDGVGTKLRLAMDLKRHDTIGIDLVAMCVNDLVVQGAEPLFFLDYFATGKLDVDTAASVITGIAEGCKQSGCALVGGETAEMPGMYHGDDYDVAGFCVGVVEKSEIIDGSKVTPGDVLVALGASGPHSNGYSLVRKILDVSNTNPEQTSLEGKSLADHLLEPTKIYVKSILSLIEQLDIHAIAHLTGGGFWENIPRVLPQGMQAVIDEASWQWPAVFSWLQQAGNVSRHEMYRTFNCGVGMVVALPAELADKAVELLTASGEKAWKIGVIAAATEGAEQVIINP.

This sequence belongs to the AIR synthase family.

The protein localises to the cytoplasm. It catalyses the reaction 2-formamido-N(1)-(5-O-phospho-beta-D-ribosyl)acetamidine + ATP = 5-amino-1-(5-phospho-beta-D-ribosyl)imidazole + ADP + phosphate + H(+). Its pathway is purine metabolism; IMP biosynthesis via de novo pathway; 5-amino-1-(5-phospho-D-ribosyl)imidazole from N(2)-formyl-N(1)-(5-phospho-D-ribosyl)glycinamide: step 2/2. The chain is Phosphoribosylformylglycinamidine cyclo-ligase from Yersinia pestis.